The sequence spans 417 residues: Phosphoglycerate kinase (417 aa).

Residues Val23, Asp24, Phe25, Asn26, Gln38, Arg39, Ser62, His63, Gly65, Arg66, Leu121, Arg122, His169, and Arg170 each coordinate (2R)-3-phosphoglycerate. ADP is bound at residue Gly213. Residue Gly213 coordinates CDP. 2 residues coordinate AMP: Ala214 and Lys215. Ala214 is a binding site for ATP. Ala214 serves as a coordination point for Mg(2+). Asp218 serves as a coordination point for CDP. Asp218 serves as a coordination point for Mg(2+). Lys219 is an AMP binding site. Lys219 contributes to the ATP binding site. Gly237 serves as a coordination point for ADP. Residue Gly237 coordinates CDP. AMP is bound by residues Gly238 and Gly312. ATP contacts are provided by Gly238 and Gly312. Gly337 and Phe342 together coordinate CDP. ADP is bound at residue Phe342. AMP is bound at residue Glu343. Positions 343, 374, and 375 each coordinate ATP. Residue Asp374 participates in Mg(2+) binding.

It belongs to the phosphoglycerate kinase family. In terms of assembly, monomer. The cofactor is Mg(2+).

The protein resides in the cytoplasm. The protein localises to the mitochondrion. It catalyses the reaction (2R)-3-phosphoglycerate + ATP = (2R)-3-phospho-glyceroyl phosphate + ADP. It functions in the pathway carbohydrate degradation; glycolysis; pyruvate from D-glyceraldehyde 3-phosphate: step 2/5. Catalyzes one of the two ATP producing reactions in the glycolytic pathway via the reversible conversion of 1,3-diphosphoglycerate to 3-phosphoglycerate. Both L- and D- forms of purine and pyrimidine nucleotides can be used as substrates, but the activity is much lower on pyrimidines. Negatively regulates the biosynthesis of acetyl-CoA from pyruvate in the mitochondrion. The chain is Phosphoglycerate kinase (PGK1) from Candida maltosa (Yeast).